The primary structure comprises 174 residues: Streptothricin acetyltransferase (174 aa).

Residues 20–170 (FIVREVFDVH…AMYWYWFSGA (151 aa)) form the N-acetyltransferase domain.

It belongs to the acetyltransferase family. GNAT subfamily.

It catalyses the reaction streptothricin F + acetyl-CoA = N(beta)-acetylstreptothricin F + CoA + H(+). Involved in resistance to streptothricin, a broad-spectrum antibiotic produced by streptomycetes. Detoxifies streptothricin via acetylation of the beta amino group of the first beta-lysyl moiety of streptothricin. The sequence is that of Streptothricin acetyltransferase (sat-1) from Escherichia coli.